Reading from the N-terminus, the 375-residue chain is DNA replication and repair protein RecF (375 aa).

30–37 (GENAQGKT) is an ATP binding site.

This sequence belongs to the RecF family.

Its subcellular location is the cytoplasm. In terms of biological role, the RecF protein is involved in DNA metabolism; it is required for DNA replication and normal SOS inducibility. RecF binds preferentially to single-stranded, linear DNA. It also seems to bind ATP. The sequence is that of DNA replication and repair protein RecF from Latilactobacillus sakei subsp. sakei (strain 23K) (Lactobacillus sakei subsp. sakei).